A 484-amino-acid polypeptide reads, in one-letter code: UDP-N-acetylmuramoyl-L-alanyl-D-glutamate--2,6-diaminopimelate ligase (484 aa).

Residue S30 participates in UDP-N-acetyl-alpha-D-muramoyl-L-alanyl-D-glutamate binding. 111–117 (GTNGKTT) provides a ligand contact to ATP. UDP-N-acetyl-alpha-D-muramoyl-L-alanyl-D-glutamate contacts are provided by residues 153-154 (TT), S180, Q186, and R188. N6-carboxylysine is present on K220. Meso-2,6-diaminopimelate is bound by residues R378, 402-405 (DNPR), G455, and E459. Positions 402-405 (DNPR) match the Meso-diaminopimelate recognition motif motif.

Belongs to the MurCDEF family. MurE subfamily. It depends on Mg(2+) as a cofactor. Post-translationally, carboxylation is probably crucial for Mg(2+) binding and, consequently, for the gamma-phosphate positioning of ATP.

The protein resides in the cytoplasm. The enzyme catalyses UDP-N-acetyl-alpha-D-muramoyl-L-alanyl-D-glutamate + meso-2,6-diaminopimelate + ATP = UDP-N-acetyl-alpha-D-muramoyl-L-alanyl-gamma-D-glutamyl-meso-2,6-diaminopimelate + ADP + phosphate + H(+). It participates in cell wall biogenesis; peptidoglycan biosynthesis. Its function is as follows. Catalyzes the addition of meso-diaminopimelic acid to the nucleotide precursor UDP-N-acetylmuramoyl-L-alanyl-D-glutamate (UMAG) in the biosynthesis of bacterial cell-wall peptidoglycan. The protein is UDP-N-acetylmuramoyl-L-alanyl-D-glutamate--2,6-diaminopimelate ligase of Phocaeicola vulgatus (strain ATCC 8482 / DSM 1447 / JCM 5826 / CCUG 4940 / NBRC 14291 / NCTC 11154) (Bacteroides vulgatus).